We begin with the raw amino-acid sequence, 469 residues long: 3-isopropylmalate dehydratase large subunit (469 aa).

Residues Cys-347, Cys-408, and Cys-411 each coordinate [4Fe-4S] cluster.

The protein belongs to the aconitase/IPM isomerase family. LeuC type 1 subfamily. Heterodimer of LeuC and LeuD. [4Fe-4S] cluster is required as a cofactor.

The enzyme catalyses (2R,3S)-3-isopropylmalate = (2S)-2-isopropylmalate. It participates in amino-acid biosynthesis; L-leucine biosynthesis; L-leucine from 3-methyl-2-oxobutanoate: step 2/4. Functionally, catalyzes the isomerization between 2-isopropylmalate and 3-isopropylmalate, via the formation of 2-isopropylmaleate. This Actinobacillus succinogenes (strain ATCC 55618 / DSM 22257 / CCUG 43843 / 130Z) protein is 3-isopropylmalate dehydratase large subunit.